A 392-amino-acid chain; its full sequence is Formate-dependent phosphoribosylglycinamide formyltransferase (392 aa).

N(1)-(5-phospho-beta-D-ribosyl)glycinamide-binding positions include 22–23 (EL) and glutamate 82. ATP contacts are provided by residues arginine 114, lysine 155, 160 to 165 (SSGKGQ), 195 to 198 (EGEV), and glutamate 203. One can recognise an ATP-grasp domain in the interval 119–308 (RLAAETLALP…EFALHVRAFL (190 aa)). Mg(2+) is bound by residues glutamate 267 and glutamate 279. N(1)-(5-phospho-beta-D-ribosyl)glycinamide-binding positions include aspartate 286, lysine 355, and 362–363 (RR).

Belongs to the PurK/PurT family. Homodimer.

It carries out the reaction N(1)-(5-phospho-beta-D-ribosyl)glycinamide + formate + ATP = N(2)-formyl-N(1)-(5-phospho-beta-D-ribosyl)glycinamide + ADP + phosphate + H(+). The protein operates within purine metabolism; IMP biosynthesis via de novo pathway; N(2)-formyl-N(1)-(5-phospho-D-ribosyl)glycinamide from N(1)-(5-phospho-D-ribosyl)glycinamide (formate route): step 1/1. Functionally, involved in the de novo purine biosynthesis. Catalyzes the transfer of formate to 5-phospho-ribosyl-glycinamide (GAR), producing 5-phospho-ribosyl-N-formylglycinamide (FGAR). Formate is provided by PurU via hydrolysis of 10-formyl-tetrahydrofolate. In Edwardsiella ictaluri (strain 93-146), this protein is Formate-dependent phosphoribosylglycinamide formyltransferase.